The following is a 335-amino-acid chain: Eukaryotic translation initiation factor 3 subunit I (335 aa).

5 WD repeats span residues 8–47 (GHER…RLGT), 50–91 (GHQG…KTWD), 145–184 (CAES…LLFN), 189–228 (EPDL…VMKT), and 286–325 (GHFG…FDFT).

It belongs to the eIF-3 subunit I family. Component of the eukaryotic translation initiation factor 3 (eIF-3) complex.

The protein localises to the cytoplasm. Component of the eukaryotic translation initiation factor 3 (eIF-3) complex, which is involved in protein synthesis of a specialized repertoire of mRNAs and, together with other initiation factors, stimulates binding of mRNA and methionyl-tRNAi to the 40S ribosome. The eIF-3 complex specifically targets and initiates translation of a subset of mRNAs involved in cell proliferation. This chain is Eukaryotic translation initiation factor 3 subunit I (tif34), found in Sclerotinia sclerotiorum (strain ATCC 18683 / 1980 / Ss-1) (White mold).